The sequence spans 480 residues: NADH-quinone oxidoreductase subunit N (480 aa).

13 consecutive transmembrane segments (helical) span residues 13–33 (ISPM…QFLI), 41–61 (PLWV…YHTT), 81–101 (VWLS…APPF), 107–127 (TLFP…MFLT), 132–152 (LIVI…MIGM), 167–187 (FLLG…LYGG), 212–232 (LGLG…PFHS), 245–265 (ITGF…IILF), 276–296 (VWKY…NIVA), 314–334 (AGYI…YYLF), 373–393 (ALAL…IGFW), 413–433 (LLFG…KITI), and 454–474 (PTLG…WIFF).

It belongs to the complex I subunit 2 family. As to quaternary structure, NDH-1 is composed of 14 different subunits. Subunits NuoA, H, J, K, L, M, N constitute the membrane sector of the complex.

It localises to the cell inner membrane. The catalysed reaction is a quinone + NADH + 5 H(+)(in) = a quinol + NAD(+) + 4 H(+)(out). Its function is as follows. NDH-1 shuttles electrons from NADH, via FMN and iron-sulfur (Fe-S) centers, to quinones in the respiratory chain. The immediate electron acceptor for the enzyme in this species is believed to be ubiquinone. Couples the redox reaction to proton translocation (for every two electrons transferred, four hydrogen ions are translocated across the cytoplasmic membrane), and thus conserves the redox energy in a proton gradient. The polypeptide is NADH-quinone oxidoreductase subunit N (Leptospira biflexa serovar Patoc (strain Patoc 1 / Ames)).